A 332-amino-acid chain; its full sequence is 4-hydroxy-3-methylbut-2-enyl diphosphate reductase (332 aa).

Position 13 (Cys13) interacts with [4Fe-4S] cluster. Residues His41 and His75 each coordinate (2E)-4-hydroxy-3-methylbut-2-enyl diphosphate. Positions 41 and 75 each coordinate dimethylallyl diphosphate. 2 residues coordinate isopentenyl diphosphate: His41 and His75. Cys97 is a binding site for [4Fe-4S] cluster. His125 contributes to the (2E)-4-hydroxy-3-methylbut-2-enyl diphosphate binding site. His125 serves as a coordination point for dimethylallyl diphosphate. His125 is a binding site for isopentenyl diphosphate. Residue Glu127 is the Proton donor of the active site. Residue Thr168 participates in (2E)-4-hydroxy-3-methylbut-2-enyl diphosphate binding. Residue Cys229 participates in [4Fe-4S] cluster binding. (2E)-4-hydroxy-3-methylbut-2-enyl diphosphate-binding residues include Ser257, Ser258, Asn259, and Ser306. The dimethylallyl diphosphate site is built by Ser257, Ser258, Asn259, and Ser306. Residues Ser257, Ser258, Asn259, and Ser306 each coordinate isopentenyl diphosphate.

The protein belongs to the IspH family. It depends on [4Fe-4S] cluster as a cofactor.

It carries out the reaction isopentenyl diphosphate + 2 oxidized [2Fe-2S]-[ferredoxin] + H2O = (2E)-4-hydroxy-3-methylbut-2-enyl diphosphate + 2 reduced [2Fe-2S]-[ferredoxin] + 2 H(+). It catalyses the reaction dimethylallyl diphosphate + 2 oxidized [2Fe-2S]-[ferredoxin] + H2O = (2E)-4-hydroxy-3-methylbut-2-enyl diphosphate + 2 reduced [2Fe-2S]-[ferredoxin] + 2 H(+). It functions in the pathway isoprenoid biosynthesis; dimethylallyl diphosphate biosynthesis; dimethylallyl diphosphate from (2E)-4-hydroxy-3-methylbutenyl diphosphate: step 1/1. It participates in isoprenoid biosynthesis; isopentenyl diphosphate biosynthesis via DXP pathway; isopentenyl diphosphate from 1-deoxy-D-xylulose 5-phosphate: step 6/6. Functionally, catalyzes the conversion of 1-hydroxy-2-methyl-2-(E)-butenyl 4-diphosphate (HMBPP) into a mixture of isopentenyl diphosphate (IPP) and dimethylallyl diphosphate (DMAPP). Acts in the terminal step of the DOXP/MEP pathway for isoprenoid precursor biosynthesis. This Chlorobaculum parvum (strain DSM 263 / NCIMB 8327) (Chlorobium vibrioforme subsp. thiosulfatophilum) protein is 4-hydroxy-3-methylbut-2-enyl diphosphate reductase.